We begin with the raw amino-acid sequence, 137 residues long: 5-hydroxytryptamine receptor 4 (137 aa).

A helical transmembrane segment spans residues 12–35; that stretch reads TPLRVAVLLAGCWAIPVLISFLPI. Asn-58 carries N-linked (GlcNAc...) asparagine glycosylation. Residues 67–90 form a helical membrane-spanning segment; the sequence is NKPYAITCSVVAFYIPFLLMVLAY. The interval 112-137 is disordered; it reads APAEGRPPSADQHSTHRMRTETKAAK.

It belongs to the G-protein coupled receptor 1 family. Interacts (via C-terminus 330-346 AA) with GRK5; this interaction is promoted by 5-HT (serotonin).

It localises to the cell membrane. Its subcellular location is the endosome membrane. In terms of biological role, G-protein coupled receptor for 5-hydroxytryptamine (serotonin), a biogenic hormone that functions as a neurotransmitter, a hormone and a mitogen. Ligand binding causes a conformation change that triggers signaling via guanine nucleotide-binding proteins (G proteins) and modulates the activity of downstream effectors. HTR4 is coupled to G(s) G alpha proteins and mediates activation of adenylate cyclase activity. In Sus scrofa (Pig), this protein is 5-hydroxytryptamine receptor 4 (HTR4).